The primary structure comprises 1031 residues: uncharacterized protein (1031 aa).

Residues 50 to 85 (FKVQINLKTAAAHLDCSCSNDKQNCVHIIAALLKYN) form an SWIM-type zinc finger. A Helicase ATP-binding domain is found at 590–751 (RALEDNQFGG…WSCFDFVLPN (162 aa)). 603–610 (DEMGLGKT) is a binding site for ATP. The DEAQ box signature appears at 702–705 (DEAQ). The Helicase C-terminal domain maps to 868–1022 (ALNIIYEALE…EDVNFFKSLS (155 aa)).

It belongs to the SNF2/RAD54 helicase family.

This is an uncharacterized protein from Mycoplasma genitalium (strain ATCC 33530 / DSM 19775 / NCTC 10195 / G37) (Mycoplasmoides genitalium).